Consider the following 72-residue polypeptide: Large ribosomal subunit protein uL29 (72 aa).

It belongs to the universal ribosomal protein uL29 family.

This is Large ribosomal subunit protein uL29 (rpmC) from Chlamydia pneumoniae (Chlamydophila pneumoniae).